We begin with the raw amino-acid sequence, 230 residues long: 3-beta-hydroxysteroid-Delta(8),Delta(7)-isomerase (230 aa).

An N-acetylthreonine modification is found at T2. 4 helical membrane passes run 29–49 (WHIL…TWLL), 66–86 (LCWF…FVLY), 121–141 (METI…IAFL), and 185–205 (FWFY…VLVL). In terms of domain architecture, EXPERA spans 61 to 204 (WRRLSLCWFA…LWLVLPGVLV (144 aa)).

Belongs to the EBP family.

It is found in the endoplasmic reticulum membrane. The protein resides in the nucleus envelope. The protein localises to the cytoplasmic vesicle. The enzyme catalyses lathosterol = 5alpha-cholest-8-en-3beta-ol. It catalyses the reaction zymosterol = 5alpha-cholesta-7,24-dien-3beta-ol. It carries out the reaction 5,6alpha-epoxy-5alpha-cholestan-3beta-ol + H2O = 5alpha-cholestane-3beta,5,6beta-triol. The catalysed reaction is 5,6beta-epoxy-5beta-cholestan-3beta-ol + H2O = 5alpha-cholestane-3beta,5,6beta-triol. It functions in the pathway steroid biosynthesis; cholesterol biosynthesis. Its activity is regulated as follows. Cholestenol Delta-isomerase and cholesterol-5,6-epoxide hydrolase (ChEH) activities are inhibited by tamoxifen and the selective AEBS ligand (4-benzyl-phenoxy)-ethyl-N-pyrrolidine (PBPE). ChEH activity is inhibited by oleic acid. Isomerase that catalyzes the conversion of Delta(8)-sterols to their corresponding Delta(7)-isomers a catalytic step in the postlanosterol biosynthesis of cholesterol. Functionally, component of the microsomal antiestrogen binding site (AEBS), a multiproteic complex at the ER membrane that consists of an association between EBP and 7-dehydrocholesterol reductase/DHCR7. This complex is responsible for cholesterol-5,6-epoxide hydrolase (ChEH) activity, which consists in the hydration of cholesterol-5,6-epoxides (5,6-EC) into cholestane-3beta,5alpha,6beta-triol (CT). The precise role of each component of this complex has not been described yet. The polypeptide is 3-beta-hydroxysteroid-Delta(8),Delta(7)-isomerase (Homo sapiens (Human)).